Reading from the N-terminus, the 408-residue chain is Glutamate N-acetyltransferase (408 aa).

The substrate site is built by threonine 150, lysine 176, threonine 189, glutamate 271, asparagine 403, and threonine 408. Threonine 189 (nucleophile) is an active-site residue.

This sequence belongs to the ArgJ family. Heterotetramer of two alpha and two beta chains.

The protein resides in the cytoplasm. The catalysed reaction is N(2)-acetyl-L-ornithine + L-glutamate = N-acetyl-L-glutamate + L-ornithine. It participates in amino-acid biosynthesis; L-arginine biosynthesis; L-ornithine and N-acetyl-L-glutamate from L-glutamate and N(2)-acetyl-L-ornithine (cyclic): step 1/1. In terms of biological role, catalyzes the transfer of the acetyl group from N(2)-acetylornithine to glutamate, forming N-acetylglutamate and L-ornithine. This chain is Glutamate N-acetyltransferase, found in Methanococcus maripaludis (strain C6 / ATCC BAA-1332).